Consider the following 612-residue polypeptide: Dihydroxy-acid dehydratase (612 aa).

Position 81 (Asp-81) interacts with Mg(2+). Cys-122 provides a ligand contact to [2Fe-2S] cluster. Residues Asp-123 and Lys-124 each coordinate Mg(2+). An N6-carboxylysine modification is found at Lys-124. Cys-193 is a binding site for [2Fe-2S] cluster. Glu-489 serves as a coordination point for Mg(2+). Ser-515 functions as the Proton acceptor in the catalytic mechanism.

It belongs to the IlvD/Edd family. In terms of assembly, homodimer. The cofactor is [2Fe-2S] cluster. Requires Mg(2+) as cofactor.

It catalyses the reaction (2R)-2,3-dihydroxy-3-methylbutanoate = 3-methyl-2-oxobutanoate + H2O. The catalysed reaction is (2R,3R)-2,3-dihydroxy-3-methylpentanoate = (S)-3-methyl-2-oxopentanoate + H2O. Its pathway is amino-acid biosynthesis; L-isoleucine biosynthesis; L-isoleucine from 2-oxobutanoate: step 3/4. It functions in the pathway amino-acid biosynthesis; L-valine biosynthesis; L-valine from pyruvate: step 3/4. Functionally, functions in the biosynthesis of branched-chain amino acids. Catalyzes the dehydration of (2R,3R)-2,3-dihydroxy-3-methylpentanoate (2,3-dihydroxy-3-methylvalerate) into 2-oxo-3-methylpentanoate (2-oxo-3-methylvalerate) and of (2R)-2,3-dihydroxy-3-methylbutanoate (2,3-dihydroxyisovalerate) into 2-oxo-3-methylbutanoate (2-oxoisovalerate), the penultimate precursor to L-isoleucine and L-valine, respectively. This chain is Dihydroxy-acid dehydratase, found in Xanthomonas axonopodis pv. citri (strain 306).